A 206-amino-acid polypeptide reads, in one-letter code: GTP cyclohydrolase 1 (206 aa).

C95, H98, and C166 together coordinate Zn(2+).

The protein belongs to the GTP cyclohydrolase I family. In terms of assembly, toroid-shaped homodecamer, composed of two pentamers of five dimers.

The catalysed reaction is GTP + H2O = 7,8-dihydroneopterin 3'-triphosphate + formate + H(+). The protein operates within cofactor biosynthesis; 7,8-dihydroneopterin triphosphate biosynthesis; 7,8-dihydroneopterin triphosphate from GTP: step 1/1. This is GTP cyclohydrolase 1 from Bartonella henselae (strain ATCC 49882 / DSM 28221 / CCUG 30454 / Houston 1) (Rochalimaea henselae).